The primary structure comprises 582 residues: uncharacterized protein (582 aa).

Helical transmembrane passes span 29-49, 117-137, 155-175, 225-245, 254-274, 287-307, 329-349, 376-396, 432-452, 458-478, 491-511, and 523-543; these read LFIVLLRFIIPSILVSFFAAL, ISAPITVIINALTLLITMGLA, VWATGFITNVIVSIATSMIIV, YVYILAGLFTIQTFNQMYFLL, FISIIPPLANLINILFDYLLI, ATVIGWSLSCLAYVIYNIVLI, YLYLIILIGLASFFRNAALSV, SIFGSVTPISNLMLQSVWGLI, IVYLLFGFGLNNIFLINLFNI, LVVSNLVLRITLVQSIFIALS, IGMAWIASLMQGLFTFAPVFF, and IYLYIWIQPINAILTCIGNWI.

It localises to the cell membrane. This is an uncharacterized protein from Mycoplasmoides gallisepticum (strain R(low / passage 15 / clone 2)) (Mycoplasma gallisepticum).